A 168-amino-acid polypeptide reads, in one-letter code: Photosystem I assembly protein Ycf3 (168 aa).

3 TPR repeats span residues A35–P68, S72–L105, and G120–N153.

It belongs to the Ycf3 family.

Its subcellular location is the plastid. The protein localises to the chloroplast thylakoid membrane. Its function is as follows. Essential for the assembly of the photosystem I (PSI) complex. May act as a chaperone-like factor to guide the assembly of the PSI subunits. The polypeptide is Photosystem I assembly protein Ycf3 (Phaseolus vulgaris (Kidney bean)).